Here is a 321-residue protein sequence, read N- to C-terminus: Tetraacyldisaccharide 4'-kinase (321 aa).

54-61 (SVGGTGKT) contributes to the ATP binding site.

This sequence belongs to the LpxK family.

It carries out the reaction a lipid A disaccharide + ATP = a lipid IVA + ADP + H(+). It functions in the pathway glycolipid biosynthesis; lipid IV(A) biosynthesis; lipid IV(A) from (3R)-3-hydroxytetradecanoyl-[acyl-carrier-protein] and UDP-N-acetyl-alpha-D-glucosamine: step 6/6. Functionally, transfers the gamma-phosphate of ATP to the 4'-position of a tetraacyldisaccharide 1-phosphate intermediate (termed DS-1-P) to form tetraacyldisaccharide 1,4'-bis-phosphate (lipid IVA). The polypeptide is Tetraacyldisaccharide 4'-kinase (Rickettsia typhi (strain ATCC VR-144 / Wilmington)).